Reading from the N-terminus, the 473-residue chain is N-lysine methyltransferase SETD6 (473 aa).

N6-methylated lysine; by autocatalysis is present on Lys-39. The region spanning 60–286 is the SET domain; it reads PPAQVAVSRQ…KGHEIFNTYG (227 aa). 73–75 serves as a coordination point for S-adenosyl-L-methionine; sequence AGY. Trp-122 provides a ligand contact to substrate. The residue at position 179 (Lys-179) is an N6-methylated lysine; by autocatalysis. S-adenosyl-L-methionine is bound at residue Tyr-223. Substrate is bound by residues Ser-224 and Gln-226. 251–252 contributes to the S-adenosyl-L-methionine binding site; it reads NH. Residues Tyr-262 and Tyr-297 each contribute to the substrate site. Residue Tyr-297 coordinates S-adenosyl-L-methionine. Lys-372 bears the N6-methylated lysine; by autocatalysis mark.

The protein belongs to the class V-like SAM-binding methyltransferase superfamily. Histone-lysine methyltransferase family. SETD6 subfamily. As to quaternary structure, monomer, homodimer and homotrimer; these structures are stabilized in the presence of S-adenosyl-L-methionine (SAM). Post-translationally, automethylated; Lys-39 and Lys-179 serve as the major automethylation sites.

It is found in the nucleus. It carries out the reaction L-lysyl-[protein] + S-adenosyl-L-methionine = N(6)-methyl-L-lysyl-[protein] + S-adenosyl-L-homocysteine + H(+). The enzyme catalyses L-lysyl(8)-[histone H2AZ] + S-adenosyl-L-methionine = N(6)-methyl-L-lysyl(8)-[histone H2AZ] + S-adenosyl-L-homocysteine + H(+). With respect to regulation, activated by automethylation. Its function is as follows. Protein-lysine N-methyltransferase. Monomethylates 'Lys-310' of the RELA subunit of NF-kappa-B complex, leading to down-regulation of NF-kappa-B transcription factor activity. Monomethylates 'Lys-8' of H2AZ (H2AZK8me1). Required for the maintenance of embryonic stem cell self-renewal. Methylates PAK4. In Homo sapiens (Human), this protein is N-lysine methyltransferase SETD6.